The primary structure comprises 147 residues: SsrA-binding protein (147 aa).

Belongs to the SmpB family.

It is found in the cytoplasm. Its function is as follows. Required for rescue of stalled ribosomes mediated by trans-translation. Binds to transfer-messenger RNA (tmRNA), required for stable association of tmRNA with ribosomes. tmRNA and SmpB together mimic tRNA shape, replacing the anticodon stem-loop with SmpB. tmRNA is encoded by the ssrA gene; the 2 termini fold to resemble tRNA(Ala) and it encodes a 'tag peptide', a short internal open reading frame. During trans-translation Ala-aminoacylated tmRNA acts like a tRNA, entering the A-site of stalled ribosomes, displacing the stalled mRNA. The ribosome then switches to translate the ORF on the tmRNA; the nascent peptide is terminated with the 'tag peptide' encoded by the tmRNA and targeted for degradation. The ribosome is freed to recommence translation, which seems to be the essential function of trans-translation. The sequence is that of SsrA-binding protein from Mycoplasmopsis fermentans (strain ATCC 19989 / NBRC 14854 / NCTC 10117 / PG18) (Mycoplasma fermentans).